Here is a 534-residue protein sequence, read N- to C-terminus: Ethanolamine kinase (534 aa).

At S23 the chain carries Phosphoserine.

Belongs to the choline/ethanolamine kinase family.

It is found in the cytoplasm. The catalysed reaction is ethanolamine + ATP = phosphoethanolamine + ADP + H(+). It catalyses the reaction choline + ATP = phosphocholine + ADP + H(+). The protein operates within phospholipid metabolism; phosphatidylethanolamine biosynthesis; phosphatidylethanolamine from ethanolamine: step 1/3. Its function is as follows. Catalyzes the committed step of phosphatidylethanolamine synthesis via the CDP-ethanolamine branch of the Kennedy pathway. Also exhibits choline kinase activity, thus contributing to phosphatidylcholine synthesis via the CDP-choline pathway, but its preferred substrate is ethanolamine. This chain is Ethanolamine kinase (EKI1), found in Saccharomyces cerevisiae (strain ATCC 204508 / S288c) (Baker's yeast).